The sequence spans 861 residues: Nuclear cap-binding protein complex subunit 1 (861 aa).

Positions 22–30 (RMPKRQRIP) match the Nuclear localization signal motif. The region spanning 36-264 (CKEMMPDIRT…LVRVVLPNVK (229 aa)) is the MIF4G domain.

It belongs to the NCBP1 family. Component of the nuclear cap-binding complex (CBC), a heterodimer composed of STO1/CBC1 and CBC2 that interacts with capped RNAs. The complex interacts strongly with the importin subunit alpha SRP1. The SRP1-CBC trimer also binds to capped RNAs, but formation of the importin alpha/beta heterodimer upon binding of KAP95 to SRP1 in the cytoplasm causes dissociation of CBC from the RNA. The CBC complex is part of the commitment complex 1 (CC1), binding to the cap of pre-mRNA and interacting with U1 snRNP subunits MUD2 and SNU56. The CBC complex is part of the NRD1 complex, composed of CBC2, NAB1, NRD1, SEN1 and STO1/CBC2. The CBC complex also interacts with NPL3 and eIF4G (TIF4631 and TIF4632).

Its subcellular location is the nucleus. It is found in the cytoplasm. It localises to the perinuclear region. Component of the CBC complex, which binds co-transcriptionally to the 5'-cap of pre-mRNAs and is involved in maturation, export and degradation of nuclear mRNAs. The CBC complex is required for efficient pre-mRNA splicing through efficient commitment complex and spliceosome formation. Together with NPL3, the CBC complex is required for export of mRNAs out of the nucleus. The CBC complex is also involved in nuclear mRNA degradation, probably by directing the mRNAs to the sites of degradation. Affects replication of the positive-strand RNA virus BMV. This is Nuclear cap-binding protein complex subunit 1 (STO1) from Saccharomyces cerevisiae (strain ATCC 204508 / S288c) (Baker's yeast).